The following is a 471-amino-acid chain: UDP-N-acetylmuramate--L-alanine ligase (471 aa).

Residue 114–120 participates in ATP binding; sequence GTHGKTT.

This sequence belongs to the MurCDEF family.

Its subcellular location is the cytoplasm. The catalysed reaction is UDP-N-acetyl-alpha-D-muramate + L-alanine + ATP = UDP-N-acetyl-alpha-D-muramoyl-L-alanine + ADP + phosphate + H(+). It participates in cell wall biogenesis; peptidoglycan biosynthesis. Functionally, cell wall formation. In Sinorhizobium medicae (strain WSM419) (Ensifer medicae), this protein is UDP-N-acetylmuramate--L-alanine ligase.